A 1357-amino-acid chain; its full sequence is DNA-directed RNA polymerase subunit beta (1357 aa).

It belongs to the RNA polymerase beta chain family. In terms of assembly, the RNAP catalytic core consists of 2 alpha, 1 beta, 1 beta' and 1 omega subunit. When a sigma factor is associated with the core the holoenzyme is formed, which can initiate transcription.

The enzyme catalyses RNA(n) + a ribonucleoside 5'-triphosphate = RNA(n+1) + diphosphate. Functionally, DNA-dependent RNA polymerase catalyzes the transcription of DNA into RNA using the four ribonucleoside triphosphates as substrates. The chain is DNA-directed RNA polymerase subunit beta from Ectopseudomonas mendocina (strain ymp) (Pseudomonas mendocina).